We begin with the raw amino-acid sequence, 117 residues long: Large ribosomal subunit protein bL20c (117 aa).

Belongs to the bacterial ribosomal protein bL20 family.

The protein localises to the plastid. Its subcellular location is the chloroplast. Functionally, binds directly to 23S ribosomal RNA and is necessary for the in vitro assembly process of the 50S ribosomal subunit. It is not involved in the protein synthesizing functions of that subunit. The polypeptide is Large ribosomal subunit protein bL20c (rpl20) (Bigelowiella natans (Pedinomonas minutissima)).